Consider the following 788-residue polypeptide: Patatin-like phospholipase domain-containing protein DEHA2B04136g (788 aa).

A helical transmembrane segment spans residues 136–156 (WPILIFISCWISLLCFMYIIV). The PNPLA domain occupies 311-503 (LCLSGGACFT…RTDIPIDALN (193 aa)). The GXSXG motif lies at 342 to 346 (GTSGG). Ser344 acts as the Nucleophile in catalysis. Residue Asp490 is the Proton acceptor of the active site. Positions 662-672 (ANFNTLTSSDS) are enriched in polar residues. Residues 662–771 (ANFNTLTSSD…DTGSRFLKSF (110 aa)) are disordered. 2 stretches are compositionally biased toward acidic residues: residues 690–705 (MFDD…DDEV) and 723–749 (EDGD…DEAN).

The protein belongs to the PLPL family.

Its subcellular location is the membrane. Probable lipid hydrolase. The sequence is that of Patatin-like phospholipase domain-containing protein DEHA2B04136g from Debaryomyces hansenii (strain ATCC 36239 / CBS 767 / BCRC 21394 / JCM 1990 / NBRC 0083 / IGC 2968) (Yeast).